The primary structure comprises 390 residues: Spore development regulator vosA (390 aa).

The 130-residue stretch at 3-132 folds into the Velvet domain; that stretch reads NNTSSDFDLI…ADQGVKLRIR (130 aa). The segment covering 137–149 has biased composition (basic and acidic residues); the sequence is TMLKRSTRPDEFH. Disordered stretches follow at residues 137–191 and 265–390; these read TMLK…PVKR and QASA…GTPQ. Positions 165 to 175 are enriched in low complexity; the sequence is PPSSSYGGYPP. The short motif at 273–280 is the Nuclear localization signal element; it reads IPDPTGQS. Composition is skewed to polar residues over residues 350 to 364 and 371 to 390; these read QTPQANTPILPSQMV and SSVTGPTTFNHPDSPNGTPQ.

Belongs to the velvet family. VosA subfamily. In terms of assembly, forms a heterodimeric complex with velB; the formation of the velB-vosA complex is light-dependent. Interacts with velA, velB and velC.

It is found in the nucleus. In terms of biological role, component of the velB-VosA heterodimeric complex that plays a dual role in activating genes associated with spore maturation and repressing certain development-associated genes. The complex binds DNA through the DNA-binding domain of vosA that recognizes an 11-nucleotide consensus sequence 5'-CTGGCCGCGGC-3' consisting of two motifs in the promoters of key developmental regulatory genes. The polypeptide is Spore development regulator vosA (Penicillium rubens (strain ATCC 28089 / DSM 1075 / NRRL 1951 / Wisconsin 54-1255) (Penicillium chrysogenum)).